The primary structure comprises 354 residues: MEQNVFFLPHEGLKLAELAEFLGAELVNSDYADVIVRSVAPISRARAGDVCYILSRRSRDELATCEASAVICDKALADLVPQHLPVMLSSNPHAAFAMAGGLFYPAALRPVAFSGESEIAPSAVIDPSARLEKGVIVEPMAVIGAHAEIGEGTRIGAHSIIGPNVKIGRDCSIAAGASIICALLGNGVIIHNGARIGQDGFGYAPGPRGMIKIVQIGRVIIQDNVEIGANTTIDRGAMDDTVIGEGTKIDNQVQIGHNVQIGRHCAIVALVGIAGSAKIGNGVQIGGQVGIKGHVTIGDGVQIAAQSGIMTDLAAGGQYGGTPGRPLNDYLRDVAQQMSKTKLRGKKPGGEQND.

His257 functions as the Proton acceptor in the catalytic mechanism.

This sequence belongs to the transferase hexapeptide repeat family. LpxD subfamily. As to quaternary structure, homotrimer.

The catalysed reaction is a UDP-3-O-[(3R)-3-hydroxyacyl]-alpha-D-glucosamine + a (3R)-hydroxyacyl-[ACP] = a UDP-2-N,3-O-bis[(3R)-3-hydroxyacyl]-alpha-D-glucosamine + holo-[ACP] + H(+). The protein operates within bacterial outer membrane biogenesis; LPS lipid A biosynthesis. Its function is as follows. Catalyzes the N-acylation of UDP-3-O-acylglucosamine using 3-hydroxyacyl-ACP as the acyl donor. Is involved in the biosynthesis of lipid A, a phosphorylated glycolipid that anchors the lipopolysaccharide to the outer membrane of the cell. The polypeptide is UDP-3-O-acylglucosamine N-acyltransferase (Rhizobium johnstonii (strain DSM 114642 / LMG 32736 / 3841) (Rhizobium leguminosarum bv. viciae)).